Consider the following 270-residue polypeptide: 4-hydroxy-tetrahydrodipicolinate reductase (270 aa).

Residues 11–16 (GAGGRM) and Glu37 each bind NAD(+). NADP(+) is bound at residue Arg38. Residues 101-103 (GTT) and 125-128 (APNM) contribute to the NAD(+) site. The active-site Proton donor/acceptor is the His158. His159 is a (S)-2,3,4,5-tetrahydrodipicolinate binding site. Lys162 serves as the catalytic Proton donor. 168–169 (GT) contributes to the (S)-2,3,4,5-tetrahydrodipicolinate binding site.

The protein belongs to the DapB family.

It localises to the cytoplasm. The enzyme catalyses (S)-2,3,4,5-tetrahydrodipicolinate + NAD(+) + H2O = (2S,4S)-4-hydroxy-2,3,4,5-tetrahydrodipicolinate + NADH + H(+). It carries out the reaction (S)-2,3,4,5-tetrahydrodipicolinate + NADP(+) + H2O = (2S,4S)-4-hydroxy-2,3,4,5-tetrahydrodipicolinate + NADPH + H(+). It participates in amino-acid biosynthesis; L-lysine biosynthesis via DAP pathway; (S)-tetrahydrodipicolinate from L-aspartate: step 4/4. Functionally, catalyzes the conversion of 4-hydroxy-tetrahydrodipicolinate (HTPA) to tetrahydrodipicolinate. This is 4-hydroxy-tetrahydrodipicolinate reductase from Shewanella baltica (strain OS223).